Here is an 847-residue protein sequence, read N- to C-terminus: Alanine--tRNA ligase (847 aa).

Positions 554, 558, 656, and 660 each coordinate Zn(2+).

It belongs to the class-II aminoacyl-tRNA synthetase family. The cofactor is Zn(2+).

The protein resides in the cytoplasm. It carries out the reaction tRNA(Ala) + L-alanine + ATP = L-alanyl-tRNA(Ala) + AMP + diphosphate. Its function is as follows. Catalyzes the attachment of alanine to tRNA(Ala) in a two-step reaction: alanine is first activated by ATP to form Ala-AMP and then transferred to the acceptor end of tRNA(Ala). Also edits incorrectly charged Ser-tRNA(Ala) and Gly-tRNA(Ala) via its editing domain. This is Alanine--tRNA ligase from Helicobacter pylori (strain Shi470).